Here is a 224-residue protein sequence, read N- to C-terminus: Probable octanoyltransferase (224 aa).

In terms of domain architecture, BPL/LPL catalytic spans 28–199 (GLTGDIALVT…KLALELGLTP (172 aa)). Substrate-binding positions include 66–73 (RGGDATYH), 130–132 (SIG), and 143–145 (GVA). Residue cysteine 161 is the Acyl-thioester intermediate of the active site.

It belongs to the LipB family.

Its subcellular location is the cytoplasm. The catalysed reaction is octanoyl-[ACP] + L-lysyl-[protein] = N(6)-octanoyl-L-lysyl-[protein] + holo-[ACP] + H(+). It functions in the pathway protein modification; protein lipoylation via endogenous pathway; protein N(6)-(lipoyl)lysine from octanoyl-[acyl-carrier-protein]: step 1/2. Its function is as follows. Catalyzes the transfer of endogenously produced octanoic acid from octanoyl-acyl-carrier-protein onto the lipoyl domains of lipoate-dependent enzymes. Lipoyl-ACP can also act as a substrate although octanoyl-ACP is likely to be the physiological substrate. The chain is Probable octanoyltransferase from Pyrobaculum aerophilum (strain ATCC 51768 / DSM 7523 / JCM 9630 / CIP 104966 / NBRC 100827 / IM2).